Here is a 336-residue protein sequence, read N- to C-terminus: Aspartate--ammonia ligase (336 aa).

It belongs to the class-II aminoacyl-tRNA synthetase family. AsnA subfamily.

It localises to the cytoplasm. The enzyme catalyses L-aspartate + NH4(+) + ATP = L-asparagine + AMP + diphosphate + H(+). It functions in the pathway amino-acid biosynthesis; L-asparagine biosynthesis; L-asparagine from L-aspartate (ammonia route): step 1/1. In Clostridium perfringens (strain SM101 / Type A), this protein is Aspartate--ammonia ligase.